Here is a 130-residue protein sequence, read N- to C-terminus: Large ribosomal subunit protein bL19 (130 aa).

The protein belongs to the bacterial ribosomal protein bL19 family.

Its function is as follows. This protein is located at the 30S-50S ribosomal subunit interface and may play a role in the structure and function of the aminoacyl-tRNA binding site. In Burkholderia lata (strain ATCC 17760 / DSM 23089 / LMG 22485 / NCIMB 9086 / R18194 / 383), this protein is Large ribosomal subunit protein bL19.